Consider the following 233-residue polypeptide: Cytidylate kinase (233 aa).

15–23 provides a ligand contact to ATP; that stretch reads GPSGAGKSS.

It belongs to the cytidylate kinase family. Type 1 subfamily.

The protein localises to the cytoplasm. It carries out the reaction CMP + ATP = CDP + ADP. It catalyses the reaction dCMP + ATP = dCDP + ADP. In Citrifermentans bemidjiense (strain ATCC BAA-1014 / DSM 16622 / JCM 12645 / Bem) (Geobacter bemidjiensis), this protein is Cytidylate kinase.